A 494-amino-acid chain; its full sequence is Protein nucleotidyltransferase YdiU (494 aa).

8 residues coordinate ATP: Gly99, Gly101, Arg102, Lys118, Asp130, Gly131, Arg181, and Arg188. Asp261 functions as the Proton acceptor in the catalytic mechanism. Mg(2+)-binding residues include Asn262 and Asp271. An ATP-binding site is contributed by Asp271.

It belongs to the SELO family. Mg(2+) is required as a cofactor. The cofactor is Mn(2+).

The enzyme catalyses L-seryl-[protein] + ATP = 3-O-(5'-adenylyl)-L-seryl-[protein] + diphosphate. It carries out the reaction L-threonyl-[protein] + ATP = 3-O-(5'-adenylyl)-L-threonyl-[protein] + diphosphate. The catalysed reaction is L-tyrosyl-[protein] + ATP = O-(5'-adenylyl)-L-tyrosyl-[protein] + diphosphate. It catalyses the reaction L-histidyl-[protein] + UTP = N(tele)-(5'-uridylyl)-L-histidyl-[protein] + diphosphate. The enzyme catalyses L-seryl-[protein] + UTP = O-(5'-uridylyl)-L-seryl-[protein] + diphosphate. It carries out the reaction L-tyrosyl-[protein] + UTP = O-(5'-uridylyl)-L-tyrosyl-[protein] + diphosphate. Nucleotidyltransferase involved in the post-translational modification of proteins. It can catalyze the addition of adenosine monophosphate (AMP) or uridine monophosphate (UMP) to a protein, resulting in modifications known as AMPylation and UMPylation. This is Protein nucleotidyltransferase YdiU from Variovorax paradoxus (strain S110).